The chain runs to 111 residues: Rubredoxin (111 aa).

Residues 11–62 (LDRFECRSCGYVYEPEKGDSKHDIAPETPFAELPINWRCPVCTAKKAAFSNI) form the Rubredoxin-like domain. The Fe cation site is built by C16, C19, C49, and C52.

The protein belongs to the rubredoxin family. Requires Fe(3+) as cofactor.

In terms of biological role, rubredoxin is a small nonheme, iron protein lacking acid-labile sulfide. Its single Fe, chelated to 4 Cys, functions as an electron acceptor and may also stabilize the conformation of the molecule. Could be involved in hydrogenase-linked redox processes. This Trichormus variabilis (strain ATCC 29413 / PCC 7937) (Anabaena variabilis) protein is Rubredoxin (rub).